Here is a 425-residue protein sequence, read N- to C-terminus: uncharacterized protein (425 aa).

An HD domain is found at 55–181 (RYAHSLGVYE…DLDTDRMDYL (127 aa)).

This is an uncharacterized protein from Mycoplasma genitalium (strain ATCC 33530 / DSM 19775 / NCTC 10195 / G37) (Mycoplasmoides genitalium).